Consider the following 274-residue polypeptide: MYRLAAFDMDGTLLTPDHRVGPETLAVLKQLVEREMVVTFATGRHYLDAQPIMAQLGLQGYLITGNGTRVYDDRGQQLQATDLPADIAEEVLHTHWHTDASMHVFRDEGWMTEFAVPEEMLRAHHLSGFHYQLTELRRLPAFGNSKVCFAGPHEELLKLQVQLRRHFAARVDLCFSAYECLEVLPLGCNKGSALDMLSRHLGLKMAECMAFGDAMNDKEMLATVGHGVVMGNALPQLKSLLPQLQVIGHCEQQAVAHYLQHWLRSPYLTYSPEL.

The active-site Nucleophile is Asp8. Residues Asp8, Asp10, and Asp213 each coordinate Mg(2+).

Belongs to the HAD-like hydrolase superfamily. Cof family. It depends on Mg(2+) as a cofactor.

The catalysed reaction is 4-amino-2-methyl-5-(diphosphooxymethyl)pyrimidine + H2O = 4-amino-2-methyl-5-(phosphooxymethyl)pyrimidine + phosphate + H(+). Catalyzes the hydrolysis of 4-amino-2-methyl-5-hydroxymethylpyrimidine pyrophosphate (HMP-PP) to 4-amino-2-methyl-5-hydroxymethylpyrimidine phosphate (HMP-P). The polypeptide is HMP-PP phosphatase (Serratia proteamaculans (strain 568)).